Here is a 301-residue protein sequence, read N- to C-terminus: General transcription and DNA repair factor IIH subunit TFB4 (301 aa).

The C4-type zinc finger occupies 259 to 276; the sequence is CSVCLSIFCEHHKKCSTC.

It belongs to the TFB4 family. Component of the 7-subunit TFIIH core complex composed of XPB, XPD, TFB1/GTF2H1, GTF2H2/P44, TFB4/GTF2H3, TFB2/GTF2H4 and TFB5/GTF2H5, which is active in NER. The core complex associates with the 3-subunit CDK-activating kinase (CAK) module composed of CYCH1/cyclin H1, CDKD and MAT1/At4g30820 to form the 10-subunit holoenzyme (holo-TFIIH) active in transcription.

It localises to the nucleus. In terms of biological role, component of the general transcription and DNA repair factor IIH (TFIIH) core complex, which is involved in general and transcription-coupled nucleotide excision repair (NER) of damaged DNA and, when complexed to CAK, in RNA transcription by RNA polymerase II. In NER, TFIIH acts by opening DNA around the lesion to allow the excision of the damaged oligonucleotide and its replacement by a new DNA fragment. In transcription, TFIIH has an essential role in transcription initiation. When the pre-initiation complex (PIC) has been established, TFIIH is required for promoter opening and promoter escape. Phosphorylation of the C-terminal tail (CTD) of the largest subunit of RNA polymerase II by the kinase module CAK controls the initiation of transcription. The protein is General transcription and DNA repair factor IIH subunit TFB4 of Arabidopsis thaliana (Mouse-ear cress).